The primary structure comprises 437 residues: F-box protein At3g62430 (437 aa).

Residues 1–49 (MDRISNLPDGVIYRVISLLSTKEATCLKYTSKNWLNLVTIIPIAVFVDS) form the F-box domain.

The protein is F-box protein At3g62430 of Arabidopsis thaliana (Mouse-ear cress).